Consider the following 379-residue polypeptide: Probable pectin lyase A (379 aa).

Positions 1–19 (MKFALLSGVAAGLLPVVSA) are cleaved as a signal peptide. Intrachain disulfides connect Cys82–Cys101 and Cys91–Cys225. Residue Arg255 is part of the active site. A disulfide bridge connects residues Cys322 and Cys330.

This sequence belongs to the polysaccharide lyase 1 family.

It is found in the secreted. It carries out the reaction Eliminative cleavage of (1-&gt;4)-alpha-D-galacturonan methyl ester to give oligosaccharides with 4-deoxy-6-O-methyl-alpha-D-galact-4-enuronosyl groups at their non-reducing ends.. Its function is as follows. Pectinolytic enzymes consist of four classes of enzymes: pectin lyase, polygalacturonase, pectin methylesterase and rhamnogalacturonase. Among pectinolytic enzymes, pectin lyase is the most important in depolymerization of pectin, since it cleaves internal glycosidic bonds of highly methylated pectins. The chain is Probable pectin lyase A (pelA) from Aspergillus oryzae (strain ATCC 42149 / RIB 40) (Yellow koji mold).